The primary structure comprises 344 residues: Glyceraldehyde-3-phosphate dehydrogenase (344 aa).

NAD(+)-binding positions include 11–12 (TI) and G110. 139-141 (SCN) is a binding site for D-glyceraldehyde 3-phosphate. The active-site Nucleophile is C140. An NAD(+)-binding site is contributed by R169. Position 195–196 (195–196 (HG)) interacts with D-glyceraldehyde 3-phosphate. Q302 is an NAD(+) binding site.

It belongs to the glyceraldehyde-3-phosphate dehydrogenase family. In terms of assembly, homotetramer.

The protein resides in the cytoplasm. It carries out the reaction D-glyceraldehyde 3-phosphate + phosphate + NADP(+) = (2R)-3-phospho-glyceroyl phosphate + NADPH + H(+). It catalyses the reaction D-glyceraldehyde 3-phosphate + phosphate + NAD(+) = (2R)-3-phospho-glyceroyl phosphate + NADH + H(+). The protein operates within carbohydrate degradation; glycolysis; pyruvate from D-glyceraldehyde 3-phosphate: step 1/5. In Pyrobaculum calidifontis (strain DSM 21063 / JCM 11548 / VA1), this protein is Glyceraldehyde-3-phosphate dehydrogenase.